The primary structure comprises 225 residues: Phosphoribosylformylglycinamidine synthase subunit PurQ (225 aa).

Positions R5–G225 constitute a Glutamine amidotransferase type-1 domain. C89 (nucleophile) is an active-site residue. Active-site residues include H198 and E200.

Part of the FGAM synthase complex composed of 1 PurL, 1 PurQ and 2 PurS subunits.

It localises to the cytoplasm. It catalyses the reaction N(2)-formyl-N(1)-(5-phospho-beta-D-ribosyl)glycinamide + L-glutamine + ATP + H2O = 2-formamido-N(1)-(5-O-phospho-beta-D-ribosyl)acetamidine + L-glutamate + ADP + phosphate + H(+). The enzyme catalyses L-glutamine + H2O = L-glutamate + NH4(+). Its pathway is purine metabolism; IMP biosynthesis via de novo pathway; 5-amino-1-(5-phospho-D-ribosyl)imidazole from N(2)-formyl-N(1)-(5-phospho-D-ribosyl)glycinamide: step 1/2. Part of the phosphoribosylformylglycinamidine synthase complex involved in the purines biosynthetic pathway. Catalyzes the ATP-dependent conversion of formylglycinamide ribonucleotide (FGAR) and glutamine to yield formylglycinamidine ribonucleotide (FGAM) and glutamate. The FGAM synthase complex is composed of three subunits. PurQ produces an ammonia molecule by converting glutamine to glutamate. PurL transfers the ammonia molecule to FGAR to form FGAM in an ATP-dependent manner. PurS interacts with PurQ and PurL and is thought to assist in the transfer of the ammonia molecule from PurQ to PurL. In Synechococcus sp. (strain JA-3-3Ab) (Cyanobacteria bacterium Yellowstone A-Prime), this protein is Phosphoribosylformylglycinamidine synthase subunit PurQ.